Here is a 225-residue protein sequence, read N- to C-terminus: Ribose-5-phosphate isomerase A (225 aa).

Substrate contacts are provided by residues Thr26–Thr29, Asp82–Asp85, and Lys95–Gly98. Glu104 serves as the catalytic Proton acceptor. Lys122 is a substrate binding site.

The protein belongs to the ribose 5-phosphate isomerase family. Homodimer.

It catalyses the reaction aldehydo-D-ribose 5-phosphate = D-ribulose 5-phosphate. The protein operates within carbohydrate degradation; pentose phosphate pathway; D-ribose 5-phosphate from D-ribulose 5-phosphate (non-oxidative stage): step 1/1. Its function is as follows. Catalyzes the reversible conversion of ribose-5-phosphate to ribulose 5-phosphate. This is Ribose-5-phosphate isomerase A from Streptococcus gordonii (strain Challis / ATCC 35105 / BCRC 15272 / CH1 / DL1 / V288).